The following is a 366-amino-acid chain: MRTDLFDFDLPAERIALRPASPRDSAKMLVVEGGALRDRTISELPQWLKRGDQLVVNDTKVIAAQLKGRRIGRETEPKIEATLIKRLDGSRWQALVKPAKKLIAGDRIRFGNEGKVCLLGHLDAEVEAKGSEGEVTLSFSFHGPALDQAIADLGSPPLPPYIASKRTPDDQDFADYQTMFAANEGAVAAPTAGLHFTPALEQALRERGVGLNRVTLHVGAGTFLPVKVEDTAGHKMHAEWGTISAETAERLNIARHNGGRIIAVGTTSLRLLESAASEDGTIQPFAAETSIFITPGYRFRAVDILLTNFHLPKSTLFMLVSAFSGLETMRRAYAHAIAQGYRFYSYGDACLLFRAGGTEVHDPSPP.

The protein belongs to the QueA family. As to quaternary structure, monomer.

Its subcellular location is the cytoplasm. It catalyses the reaction 7-aminomethyl-7-carbaguanosine(34) in tRNA + S-adenosyl-L-methionine = epoxyqueuosine(34) in tRNA + adenine + L-methionine + 2 H(+). It functions in the pathway tRNA modification; tRNA-queuosine biosynthesis. In terms of biological role, transfers and isomerizes the ribose moiety from AdoMet to the 7-aminomethyl group of 7-deazaguanine (preQ1-tRNA) to give epoxyqueuosine (oQ-tRNA). This is S-adenosylmethionine:tRNA ribosyltransferase-isomerase from Bradyrhizobium diazoefficiens (strain JCM 10833 / BCRC 13528 / IAM 13628 / NBRC 14792 / USDA 110).